A 419-amino-acid polypeptide reads, in one-letter code: Glucose-1-phosphate adenylyltransferase (419 aa).

Alpha-D-glucose 1-phosphate-binding positions include Tyr-106, Gly-171, 186-187, and Ser-204; that span reads EK.

Belongs to the bacterial/plant glucose-1-phosphate adenylyltransferase family. Homotetramer.

The enzyme catalyses alpha-D-glucose 1-phosphate + ATP + H(+) = ADP-alpha-D-glucose + diphosphate. It functions in the pathway glycan biosynthesis; glycogen biosynthesis. Its function is as follows. Involved in the biosynthesis of ADP-glucose, a building block required for the elongation reactions to produce glycogen. Catalyzes the reaction between ATP and alpha-D-glucose 1-phosphate (G1P) to produce pyrophosphate and ADP-Glc. The polypeptide is Glucose-1-phosphate adenylyltransferase (Roseobacter denitrificans (strain ATCC 33942 / OCh 114) (Erythrobacter sp. (strain OCh 114))).